Reading from the N-terminus, the 293-residue chain is Ribosomal protein L11 methyltransferase (293 aa).

T145, G166, D188, and N230 together coordinate S-adenosyl-L-methionine.

It belongs to the methyltransferase superfamily. PrmA family.

The protein localises to the cytoplasm. The enzyme catalyses L-lysyl-[protein] + 3 S-adenosyl-L-methionine = N(6),N(6),N(6)-trimethyl-L-lysyl-[protein] + 3 S-adenosyl-L-homocysteine + 3 H(+). Its function is as follows. Methylates ribosomal protein L11. This is Ribosomal protein L11 methyltransferase from Shigella sonnei (strain Ss046).